Reading from the N-terminus, the 36-residue chain is Pancreatic polypeptide (36 aa).

Y36 is subject to Tyrosine amide.

This sequence belongs to the NPY family.

The protein resides in the secreted. Hormone secreted by pancreatic cells that acts as a regulator of pancreatic and gastrointestinal functions. The chain is Pancreatic polypeptide (PPY) from Meleagris gallopavo (Wild turkey).